A 254-amino-acid chain; its full sequence is Claudin-16 (254 aa).

Residues 1–22 lie on the Cytoplasmic side of the membrane; it reads MGPGLAASHVSFPDSLLAKMRD. A helical transmembrane segment spans residues 23 to 43; that stretch reads LLQYVACFFAFFSAGFLVVAT. Residues 44–98 lie on the Extracellular side of the membrane; that stretch reads WTDCWMVNADDSLEVSTKCRGLWWECVTNAFDGIRTCDEYDSILAEHSLKLVVTR. The chain crosses the membrane as a helical span at residues 99–119; the sequence is ALMITADILAGFGFITLLLGL. Residues 120 to 134 are Cytoplasmic-facing; sequence DCVKFLPDEPYIKVR. The helical transmembrane segment at 135-155 threads the bilayer; it reads ISFVAGTTLLIAGAPGIIGSV. The Extracellular segment spans residues 156–188; sequence WYAVDVYVERSSLVLHNIFLGIQYKFGWSCWLG. A helical transmembrane segment spans residues 189-209; the sequence is MAGSLGCFLAGAILTCCLYLF. Topologically, residues 210-254 are cytoplasmic; the sequence is KDVGPERSYPYSTRKAYSTTAVSMPRSHAIPRTQTAKMYAVDTRV. Positions 252 to 254 match the Interaction with TJP1 motif; the sequence is TRV.

This sequence belongs to the claudin family. Can form heteropolymeric tight junction strands with other claudins. Interacts with CLDN19. Interacts (via PDZ-binding motif TRV) with TJP1 (via PDZ domain). Cannot form tight junction strands on its own. Expressed preferentially in kidney.

The protein localises to the cell junction. It is found in the tight junction. Its subcellular location is the cell membrane. It carries out the reaction Mg(2+)(in) = Mg(2+)(out). It catalyses the reaction Ca(2+)(in) = Ca(2+)(out). The catalysed reaction is Na(+)(in) = Na(+)(out). The enzyme catalyses K(+)(in) = K(+)(out). It carries out the reaction Rb(+)(in) = Rb(+)(out). It catalyses the reaction Cs(+)(in) = Cs(+)(out). The catalysed reaction is Li(+)(in) = Li(+)(out). Forms paracellular channels: coassembles with CLDN19 into tight junction strands with cation-selective channels through the strands, conveying epithelial permeability in a process known as paracellular tight junction permeability. Involved in the maintenance of ion gradients along the nephron. In the thick ascending limb (TAL) of Henle's loop, facilitates sodium paracellular permeability from the interstitial compartment to the lumen, contributing to the lumen-positive transepithelial potential that drives paracellular magnesium and calcium reabsorption. The sequence is that of Claudin-16 (CLDN16) from Bos taurus (Bovine).